Here is a 317-residue protein sequence, read N- to C-terminus: Melanocyte-stimulating hormone receptor (317 aa).

Over 1–37 the chain is Extracellular; it reads MPVQGSQRRLLGSLNSTPTATPKLGLAANQTGAQCLE. The N-linked (GlcNAc...) asparagine glycan is linked to N29. A helical membrane pass occupies residues 38–63; the sequence is VSIPDGLFLSLGLVSLVENVLVVAAI. Residues 64–72 lie on the Cytoplasmic side of the membrane; the sequence is ARNRNLHSP. Residues 73-93 form a helical membrane-spanning segment; that stretch reads MYCFICCLALSDLLVSGSNML. Over 94-118 the chain is Extracellular; it reads ETAVILLLEAGALAARAAVVQQLDN. Residues 119 to 140 traverse the membrane as a helical segment; it reads VIDVITCSSMLSSLCFLGAIAM. Topologically, residues 141–163 are cytoplasmic; that stretch reads DRYISIFYALRYHSIVTLPRARG. A helical membrane pass occupies residues 164-183; the sequence is VVAAIWVASILFSTLFIAYY. Topologically, residues 184 to 191 are extracellular; that stretch reads DHVAVLLC. Residues 192–211 form a helical membrane-spanning segment; that stretch reads LVVFFLAMLVLMAVLYVHML. At 212–240 the chain is on the cytoplasmic side; sequence ARACQHAQGIAQLHKRQRPAHQGVGLKGA. Residues 241-266 form a helical membrane-spanning segment; that stretch reads ATLTILLGIFFLCWGPFFLHLTLIVL. Topologically, residues 267–279 are extracellular; the sequence is CPQHPTCSCIFKN. Residues 280–300 traverse the membrane as a helical segment; the sequence is FNLFLALIICNAIIDPLIYAF. Over 301–317 the chain is Cytoplasmic; sequence RSQELRRTLKKVLLCSW. C315 carries S-palmitoyl cysteine lipidation.

It belongs to the G-protein coupled receptor 1 family. In terms of assembly, interacts with MGRN1, but does not undergo MGRN1-mediated ubiquitination; this interaction competes with GNAS-binding and thus inhibits agonist-induced cAMP production. Interacts with OPN3; the interaction results in a decrease in MC1R-mediated cAMP signaling and ultimately a decrease in melanin production in melanocytes.

Its subcellular location is the cell membrane. In terms of biological role, receptor for MSH (alpha, beta and gamma) and ACTH. The activity of this receptor is mediated by G proteins which activate adenylate cyclase. Mediates melanogenesis, the production of eumelanin (black/brown) and phaeomelanin (red/yellow), via regulation of cAMP signaling in melanocytes. The polypeptide is Melanocyte-stimulating hormone receptor (MC1R) (Presbytis comata (Grizzled leaf monkey)).